A 72-amino-acid polypeptide reads, in one-letter code: Translation initiation factor IF-1 (72 aa).

One can recognise an S1-like domain in the interval 1-72 (MAKEDSIEME…SKGRIVYRAR (72 aa)).

Belongs to the IF-1 family. As to quaternary structure, component of the 30S ribosomal translation pre-initiation complex which assembles on the 30S ribosome in the order IF-2 and IF-3, IF-1 and N-formylmethionyl-tRNA(fMet); mRNA recruitment can occur at any time during PIC assembly.

It is found in the cytoplasm. In terms of biological role, one of the essential components for the initiation of protein synthesis. Stabilizes the binding of IF-2 and IF-3 on the 30S subunit to which N-formylmethionyl-tRNA(fMet) subsequently binds. Helps modulate mRNA selection, yielding the 30S pre-initiation complex (PIC). Upon addition of the 50S ribosomal subunit IF-1, IF-2 and IF-3 are released leaving the mature 70S translation initiation complex. This chain is Translation initiation factor IF-1, found in Nitrosococcus oceani (strain ATCC 19707 / BCRC 17464 / JCM 30415 / NCIMB 11848 / C-107).